We begin with the raw amino-acid sequence, 271 residues long: Aminodeoxychorismate lyase (271 aa).

Lys140 bears the N6-(pyridoxal phosphate)lysine mark.

It belongs to the class-IV pyridoxal-phosphate-dependent aminotransferase family. In terms of assembly, homodimer. It depends on pyridoxal 5'-phosphate as a cofactor.

The enzyme catalyses 4-amino-4-deoxychorismate = 4-aminobenzoate + pyruvate + H(+). Its pathway is cofactor biosynthesis; tetrahydrofolate biosynthesis; 4-aminobenzoate from chorismate: step 2/2. In terms of biological role, involved in the biosynthesis of p-aminobenzoate (PABA), a precursor of tetrahydrofolate. Converts 4-amino-4-deoxychorismate into 4-aminobenzoate (PABA) and pyruvate. This is Aminodeoxychorismate lyase (pabC) from Vibrio harveyi (Beneckea harveyi).